The primary structure comprises 24 residues: Defensin D6 (24 aa).

It belongs to the DEFL family. Group IV subfamily. In terms of tissue distribution, distributed in the epidermal cell layer of leaves and in the subepidermal layer region of stems. Not in roots.

It is found in the secreted. The protein localises to the cell wall. Its function is as follows. Antimicrobial peptide. Active against Fusarium spp., Gram-positive and Gram-negative bacterial pathogens. In Spinacia oleracea (Spinach), this protein is Defensin D6.